Here is a 465-residue protein sequence, read N- to C-terminus: CUGBP Elav-like family member 3 (465 aa).

RRM domains are found at residues 7–88 (IKLF…PADS) and 95–175 (RKLF…FADT). The segment covering 346–359 (PPALVAQQPPPPPQ) has biased composition (pro residues). Residues 346–379 (PPALVAQQPPPPPQQQQQQQQQQQQQQQREGPDG) are disordered. Residues 360–373 (QQQQQQQQQQQQQQ) show a composition bias toward low complexity. An RRM 3 domain is found at 380–458 (CNIFIYHLPQ…KRLKVQLKRP (79 aa)).

This sequence belongs to the CELF/BRUNOL family. As to expression, expressed in brain.

Its subcellular location is the nucleus. It is found in the cytoplasm. Its function is as follows. RNA-binding protein involved in the regulation of pre-mRNA alternative splicing. Mediates exon inclusion and/or exclusion in pre-mRNA that are subject to tissue-specific and developmentally regulated alternative splicing. Specifically activates exon 5 inclusion of cardiac isoforms of TNNT2 during heart remodeling at the juvenile to adult transition. Activates the splicing of MAPT/Tau exon 10. Binds to muscle-specific splicing enhancer (MSE) intronic sites flanking the alternative exon 5 of TNNT2 pre-mRNA. This Homo sapiens (Human) protein is CUGBP Elav-like family member 3 (CELF3).